Here is a 322-residue protein sequence, read N- to C-terminus: Sideroflexin-2 (322 aa).

M1 bears the N-acetylmethionine mark. A run of 5 helical transmembrane segments spans residues 100 to 122 (MIIT…WQWV), 142 to 164 (SVRQ…AVGM), 174 to 192 (LVGR…CVNI), 228 to 250 (VVIS…MERL), and 265 to 287 (PLQV…GLFP).

The protein belongs to the sideroflexin family.

Its subcellular location is the mitochondrion inner membrane. The protein resides in the mitochondrion outer membrane. It catalyses the reaction L-serine(in) = L-serine(out). Mitochondrial amino-acid transporter that mediates transport of serine into mitochondria. Involved in mitochondrial iron homeostasis by regulating heme biosynthesis. The chain is Sideroflexin-2 from Bos taurus (Bovine).